The chain runs to 197 residues: dTTP/UTP pyrophosphatase (197 aa).

Asp-70 functions as the Proton acceptor in the catalytic mechanism.

This sequence belongs to the Maf family. YhdE subfamily. Homodimer. Can also form homotetramers. A divalent metal cation is required as a cofactor.

The protein localises to the cytoplasm. The enzyme catalyses dTTP + H2O = dTMP + diphosphate + H(+). It carries out the reaction UTP + H2O = UMP + diphosphate + H(+). The catalysed reaction is 5-methyl-UTP + H2O = 5-methyl-UMP + diphosphate + H(+). It catalyses the reaction psi-UTP + H2O = psi-UMP + diphosphate + H(+). The enzyme catalyses 5-methyl-CTP + H2O = 5-methyl-CMP + diphosphate + H(+). Its function is as follows. Nucleoside triphosphate pyrophosphatase that hydrolyzes dTTP and UTP. Can also hydrolyze TTP and the modified nucleotides 5-methyl-UTP (m(5)UTP), pseudo-UTP and 5-methyl-CTP (m(5)CTP). Has weak activity with CTP. May have a dual role in cell division arrest and in preventing the incorporation of modified nucleotides into cellular nucleic acids. Important in maintenance of cell shape. This chain is dTTP/UTP pyrophosphatase (yhdE), found in Escherichia coli (strain K12).